We begin with the raw amino-acid sequence, 336 residues long: MSKINLLLLCGGGSAEHDISLLSANYFETSLAKSEQVNVLRVVLDKFGQYQTAAGDDCELTNNREIRFRDETKAPWPVDYVIPCIHGYPGETGDIQSYFNLIQLPYFGCESEASSNCFNKITAKMWFSALGIPNTPYIFLNQYDDEAIAQTQAALENWGSIFVKAASQGSSVGCYKVDDSSKVAGVLKDAFGYAPYVIVEKTIKARELEVAVYEYQGEVVATLPGEIICDSNTFYTFDEKYAKSSKARTDVVAQNVPADISDQIRAYAIKAFKGMKLRHLSRIDFFLTQDNEILLNEINTFPGSTPISMFPKMLQNHGHDFTEYLSLVIKGQLAAK.

One can recognise an ATP-grasp domain in the interval 124–330 (KMWFSALGIP…FTEYLSLVIK (207 aa)). Residue 154-209 (ALENWGSIFVKAASQGSSVGCYKVDDSSKVAGVLKDAFGYAPYVIVEKTIKARELE) coordinates ATP. Mg(2+) is bound by residues Asp284, Glu297, and Asn299.

This sequence belongs to the D-alanine--D-alanine ligase family. It depends on Mg(2+) as a cofactor. The cofactor is Mn(2+).

It is found in the cytoplasm. The catalysed reaction is 2 D-alanine + ATP = D-alanyl-D-alanine + ADP + phosphate + H(+). It functions in the pathway cell wall biogenesis; peptidoglycan biosynthesis. In terms of biological role, cell wall formation. This chain is D-alanine--D-alanine ligase, found in Shewanella sp. (strain MR-7).